The sequence spans 129 residues: UPF0325 protein YPTS_3127 (129 aa).

This sequence belongs to the UPF0325 family.

This chain is UPF0325 protein YPTS_3127, found in Yersinia pseudotuberculosis serotype IB (strain PB1/+).